The primary structure comprises 128 residues: Large ribosomal subunit protein bL12 (128 aa).

Belongs to the bacterial ribosomal protein bL12 family. As to quaternary structure, homodimer. Part of the ribosomal stalk of the 50S ribosomal subunit. Forms a multimeric L10(L12)X complex, where L10 forms an elongated spine to which 2 to 4 L12 dimers bind in a sequential fashion. Binds GTP-bound translation factors.

Functionally, forms part of the ribosomal stalk which helps the ribosome interact with GTP-bound translation factors. Is thus essential for accurate translation. The protein is Large ribosomal subunit protein bL12 of Corynebacterium efficiens (strain DSM 44549 / YS-314 / AJ 12310 / JCM 11189 / NBRC 100395).